Consider the following 347-residue polypeptide: Protein pelota homolog (347 aa).

This sequence belongs to the eukaryotic release factor 1 family. Pelota subfamily. Monomer. It depends on a divalent metal cation as a cofactor.

The protein localises to the cytoplasm. May function in recognizing stalled ribosomes, interact with stem-loop structures in stalled mRNA molecules, and effect endonucleolytic cleavage of the mRNA. May play a role in the release non-functional ribosomes and degradation of damaged mRNAs. Has endoribonuclease activity. This chain is Protein pelota homolog, found in Methanothrix thermoacetophila (strain DSM 6194 / JCM 14653 / NBRC 101360 / PT) (Methanosaeta thermophila).